A 397-amino-acid polypeptide reads, in one-letter code: Proteinase-activated receptor 2 (397 aa).

Residues 1-25 (MRSPSAAWLLGAAILLAASLSCSGT) form the signal peptide. A propeptide spans 26–36 (IQGTNRSSKGR) (removed for receptor activation). N-linked (GlcNAc...) asparagine glycosylation occurs at Asn30. The Extracellular portion of the chain corresponds to 37–71 (SLIGKVDGTSHVTGKGVTVETVFSVDEFSASVLTG). A helical membrane pass occupies residues 72-101 (KLTTVFLPIVYTIVFVVGLPSNGMALWVFL). The Cytoplasmic portion of the chain corresponds to 102–108 (FRTKKKH). A helical transmembrane segment spans residues 109–137 (PAVIYMANLALADLLSVIWFPLKIAYHIH). Residues 138-149 (GNNWIYGEALCN) are Extracellular-facing. The cysteines at positions 148 and 226 are disulfide-linked. A helical membrane pass occupies residues 150 to 177 (VLIGFFYGNMYCSILFMTCLSVQRYWVI). The Cytoplasmic portion of the chain corresponds to 178 to 183 (VNPMGH). Residues 184 to 211 (SRKKANIAIGISLAIWLLILLVTIPLYV) traverse the membrane as a helical segment. The Extracellular portion of the chain corresponds to 212–235 (VKQTIFIPALNITTCHDVLPEQLL). An N-linked (GlcNAc...) asparagine glycan is attached at Asn222. Residues 236–269 (VGDMFNYFLSLAIGVFLFPAFLTASAYVLMIRML) traverse the membrane as a helical segment. At 270–277 (RSSAMDEN) the chain is on the cytoplasmic side. The helical transmembrane segment at 278–317 (SEKKRKRAIKLIVTVLAMYLICFTPSNLLLVVHYFLIKSQ) threads the bilayer. At 318–323 (GQSHVY) the chain is on the extracellular side. The helical transmembrane segment at 324 to 347 (ALYIVALCLSTLNSCIDPFVYYFV) threads the bilayer. Topologically, residues 348-397 (SHDFRDHAKNALLCRSVRTVKQMQVSLTSKKHSRKSSSYSSSSTTVKTSY) are cytoplasmic. Cys361 is lipidated: S-palmitoyl cysteine. A disordered region spans residues 373 to 397 (SLTSKKHSRKSSSYSSSSTTVKTSY). The span at 383 to 397 (SSSYSSSSTTVKTSY) shows a compositional bias: low complexity.

This sequence belongs to the G-protein coupled receptor 1 family. In terms of assembly, interacts with TLR4, COPS5 and TMED2. Interacts with GNAQ, GNA11, GNA12, GNA13 and GNA14. Post-translationally, a proteolytic cleavage generates a new N-terminus that functions as a tethered ligand. Activating serine proteases include trypsin, mast cell tryptase, coagulation factors VII and Xa, myeloblastin/PRTN3 and membrane-type serine protease 1/ST14. Subsequent cleavage by serine proteases, including neutrophil elastase and cathepsin G, leads to receptor deactivation. At least in part, implicated proteases are also shown to activate the receptor; the glycosylation status of the receptor is thought to contribute to the difference. In addition to conventional trypsin-like proteases activated by other proteases and glycosidases derived from bacteria, fungi and insects. Activated by serine protease allergens such as dust mite Der p3 and Der p9 and mold Pen c13. Activated by P.gingivalis arginine-specific (trypsin-like) cysteine proteinases called gingipains. Activated by S.griseus exogenous chitinase. Activated by A.alternata aspartate protease; the cleavage generates non-conventional processed forms. Proteolytically cleaved by coagulation factor Xa (F10); cleavage results in activation of F2RL1-dependent signaling. N-glycosylated and sialylated. In terms of processing, multiple phosphorylated on serine and threonine residues in the cytoplasmic region upon receptor activation; required for receptor desensitization and recruitment of beta-arrestin. Post-translationally, monoubiquitinated by CBL at the plasma membrane and in early endosomes; not required for receptor endocytosis but for translocation to late endosomes or lysosomes. Deubiquitination involves STAMBP and USP8; required for lysosomal trafficking and receptor degradation. In terms of tissue distribution, widely expressed in tissues with especially high levels in pancreas, liver, kidney, small intestine, and colon. Moderate expression is detected in many organs, but none in brain or skeletal muscle. Expressed in endothelial cells.

It is found in the cell membrane. Its activity is regulated as follows. Activated upon interaction by mucunain, a cowhage (Mucuna pruriens) plant cysteine proteinase. Its function is as follows. Receptor for trypsin and trypsin-like enzymes coupled to G proteins. Its function is mediated through the activation of several signaling pathways including phospholipase C (PLC), intracellular calcium, mitogen-activated protein kinase (MAPK), I-kappaB kinase/NF-kappaB and Rho. Can also be transactivated by cleaved F2R/PAR1. Involved in modulation of inflammatory responses and regulation of innate and adaptive immunity, and acts as a sensor for proteolytic enzymes generated during infection. Generally is promoting inflammation. Can signal synergistically with TLR4 and probably TLR2 in inflammatory responses and modulates TLR3 signaling. Has a protective role in establishing the endothelial barrier; the activity involves coagulation factor X. Regulates endothelial cell barrier integrity during neutrophil extravasation, probably following proteolytic cleavage by PRTN3. Proposed to have a bronchoprotective role in airway epithelium, but also shown to compromise the airway epithelial barrier by interrupting E-cadherin adhesion. Involved in the regulation of vascular tone; activation results in hypotension presumably mediated by vasodilation. Associates with a subset of G proteins alpha subunits such as GNAQ, GNA11, GNA14, GNA12 and GNA13, but probably not with G(o)-alpha, G(i) subunit alpha-1 and G(i) subunit alpha-2. However, according to PubMed:21627585 can signal through G(i) subunit alpha. Believed to be a class B receptor which internalizes as a complex with arrestin and traffic with it to endosomal vesicles, presumably as desensitized receptor, for extended periods of time. Mediates inhibition of TNF-alpha stimulated JNK phosphorylation via coupling to GNAQ and GNA11; the function involves dissociation of RIPK1 and TRADD from TNFR1. Mediates phosphorylation of nuclear factor NF-kappa-B RELA subunit at 'Ser-536'; the function involves IKBKB and is predominantly independent of G proteins. Involved in cellular migration. Involved in cytoskeletal rearrangement and chemotaxis through beta-arrestin-promoted scaffolds; the function is independent of GNAQ and GNA11 and involves promotion of cofilin dephosphorylation and actin filament severing. Induces redistribution of COPS5 from the plasma membrane to the cytosol and activation of the JNK cascade is mediated by COPS5. Involved in the recruitment of leukocytes to the sites of inflammation and is the major PAR receptor capable of modulating eosinophil function such as pro-inflammatory cytokine secretion, superoxide production and degranulation. During inflammation promotes dendritic cell maturation, trafficking to the lymph nodes and subsequent T-cell activation. Involved in antimicrobial response of innate immune cells; activation enhances phagocytosis of Gram-positive and killing of Gram-negative bacteria. Acts synergistically with interferon-gamma in enhancing antiviral responses. Implicated in a number of acute and chronic inflammatory diseases such as of the joints, lungs, brain, gastrointestinal tract, periodontium, skin, and vascular systems, and in autoimmune disorders. Probably mediates activation of pro-inflammatory and pro-fibrotic responses in fibroblasts, triggered by coagulation factor Xa (F10). Mediates activation of barrier protective signaling responses in endothelial cells, triggered by coagulation factor Xa (F10). This is Proteinase-activated receptor 2 (F2RL1) from Homo sapiens (Human).